Here is a 213-residue protein sequence, read N- to C-terminus: Outer-membrane lipoprotein carrier protein (213 aa).

The first 18 residues, 1 to 18 (MKYFATICIAAYAGLAGA), serve as a signal peptide directing secretion.

It belongs to the LolA family. As to quaternary structure, monomer.

Its subcellular location is the periplasm. Participates in the translocation of lipoproteins from the inner membrane to the outer membrane. Only forms a complex with a lipoprotein if the residue after the N-terminal Cys is not an aspartate (The Asp acts as a targeting signal to indicate that the lipoprotein should stay in the inner membrane). In Albidiferax ferrireducens (strain ATCC BAA-621 / DSM 15236 / T118) (Rhodoferax ferrireducens), this protein is Outer-membrane lipoprotein carrier protein.